The primary structure comprises 140 residues: MAQMYLAVTIIALLAISHGVSAKRGCSAFGHSCFGGHGKRSGDTSAMDQLSNQDGVLMARHQLGQEETPPHPVYPHSGYNVLASGDDIIPIRDGGVYDREDGGAAREVMKMKLRNIFKHWMDNYRRSQQNPDDGYYIESL.

The signal sequence occupies residues 1-22; the sequence is MAQMYLAVTIIALLAISHGVSA. A disulfide bond links Cys26 and Cys33. His37 is subject to Histidine amide. Residues 41-140 constitute a propeptide that is removed on maturation; sequence SGDTSAMDQL…PDDGYYIESL (100 aa).

In terms of tissue distribution, expressed in corpora cardiaca (CC), corpora allata (CA), antennal lobe (AL) and gnathal ganglion (GNG) (at protein level). Expression detected in few animals (at protein level).

Its subcellular location is the secreted. Ligand for the CCHamide-2 receptor CCHa2-R. The protein is Neuropeptide CCHamide-2 of Agrotis ipsilon (Black cutworm moth).